Here is a 393-residue protein sequence, read N- to C-terminus: S-adenosylmethionine synthase (393 aa).

Residue histidine 16 participates in ATP binding. A Mg(2+)-binding site is contributed by aspartate 18. A K(+)-binding site is contributed by glutamate 44. L-methionine is bound by residues glutamate 57 and glutamine 100. The flexible loop stretch occupies residues 100–110 (QSNDIAQGVDH). Residues 167-169 (DAK), 238-239 (RF), aspartate 247, 253-254 (RK), alanine 270, and lysine 274 each bind ATP. Aspartate 247 is an L-methionine binding site. Lysine 278 provides a ligand contact to L-methionine.

Belongs to the AdoMet synthase family. As to quaternary structure, homotetramer; dimer of dimers. Mg(2+) serves as cofactor. The cofactor is K(+).

It is found in the cytoplasm. It catalyses the reaction L-methionine + ATP + H2O = S-adenosyl-L-methionine + phosphate + diphosphate. It participates in amino-acid biosynthesis; S-adenosyl-L-methionine biosynthesis; S-adenosyl-L-methionine from L-methionine: step 1/1. Its function is as follows. Catalyzes the formation of S-adenosylmethionine (AdoMet) from methionine and ATP. The overall synthetic reaction is composed of two sequential steps, AdoMet formation and the subsequent tripolyphosphate hydrolysis which occurs prior to release of AdoMet from the enzyme. This is S-adenosylmethionine synthase from Paracidovorax citrulli (strain AAC00-1) (Acidovorax citrulli).